The chain runs to 271 residues: Interleukin-1 alpha (271 aa).

Residues 1-112 constitute a propeptide that is removed on maturation; sequence MAKVPDMFED…DSEEEIIKPR (112 aa). K82 carries the N6-acetyllysine modification. N6-myristoyl lysine attachment occurs at residues K82 and K83. A nuclear localization signal (NLS) region spans residues 82 to 86; the sequence is KKRRL. S87 carries the post-translational modification Phosphoserine. Residues N102 and N141 are each glycosylated (N-linked (GlcNAc...) asparagine).

It belongs to the IL-1 family. In terms of assembly, monomer. Interacts with TMED10; the interaction mediates the translocation from the cytoplasm into the ERGIC (endoplasmic reticulum-Golgi intermediate compartment) and thereby secretion. Interacts with IL1R1. Interacts with S100A13; this interaction is the first step in the export of IL1A, followed by direct translocation of this complex across the plasma membrane. Acetylated within its nuclear localization sequence, which impacts subcellular localization. Post-translationally, proteolytic processed by CAPN1 in a calcium-dependent manner. Cleavage from 31 kDa precursor to 18 kDa biologically active molecules. In terms of processing, phosphorylated. Phosphorylation greatly enhances susceptibility to digestion and promotes the conversion of pre-IL1A alpha to the biologically active IL1A.

The protein resides in the nucleus. It localises to the cytoplasm. The protein localises to the secreted. Functionally, cytokine constitutively present intracellularly in nearly all resting non-hematopoietic cells that plays an important role in inflammation and bridges the innate and adaptive immune systems. After binding to its receptor IL1R1 together with its accessory protein IL1RAP, forms the high affinity interleukin-1 receptor complex. Signaling involves the recruitment of adapter molecules such as MYD88, IRAK1 or IRAK4. In turn, mediates the activation of NF-kappa-B and the three MAPK pathways p38, p42/p44 and JNK pathways. Within the cell, acts as an alarmin and cell death results in its liberation in the extracellular space after disruption of the cell membrane to induce inflammation and alert the host to injury or damage. In addition to its role as a danger signal, which occurs when the cytokine is passively released by cell necrosis, directly senses DNA damage and acts as a signal for genotoxic stress without loss of cell integrity. This Homo sapiens (Human) protein is Interleukin-1 alpha (IL1A).